A 184-amino-acid polypeptide reads, in one-letter code: Large ribosomal subunit protein uL6 (184 aa).

The protein belongs to the universal ribosomal protein uL6 family. As to quaternary structure, part of the 50S ribosomal subunit.

Functionally, this protein binds to the 23S rRNA, and is important in its secondary structure. It is located near the subunit interface in the base of the L7/L12 stalk, and near the tRNA binding site of the peptidyltransferase center. The chain is Large ribosomal subunit protein uL6 from Pyrococcus furiosus (strain ATCC 43587 / DSM 3638 / JCM 8422 / Vc1).